Reading from the N-terminus, the 382-residue chain is 2-heptyl-3-hydroxy-4(1H)-quinolone synthase (382 aa).

Belongs to the 3-hydroxybenzoate 6-hydroxylase family.

It catalyses the reaction 2-heptyl-4(1H)-quinolone + NADH + O2 + H(+) = 2-heptyl-3-hydroxy-4(1H)-quinolone + NAD(+) + H2O. In terms of biological role, involved in the terminal step of the biosynthesis of quinolone which in addition to serve as a potent signal for quorum sensing, chelates iron and promotes the formation of membrane vesicles (MVs). Catalyzes the hydroxylation of 2-heptyl-4-quinolone (C7-HHQ) to yield 2-heptyl-3-hydroxy-4-quinolone (PQS). The chain is 2-heptyl-3-hydroxy-4(1H)-quinolone synthase (pqsH) from Pseudomonas aeruginosa (strain ATCC 15692 / DSM 22644 / CIP 104116 / JCM 14847 / LMG 12228 / 1C / PRS 101 / PAO1).